Here is a 34-residue protein sequence, read N- to C-terminus: Cycloamanide B proprotein (34 aa).

A propeptide spanning residues 1-10 (MSDINAARLP) is cleaved from the precursor. The segment at residues 11 to 17 (SFFFPIP) is a cross-link (cyclopeptide (Ser-Pro)). A propeptide spanning residues 18–34 (CISDDIEMVLTRGESLC) is cleaved from the precursor.

The protein belongs to the MSDIN fungal toxin family. Post-translationally, processed by the macrocyclase-peptidase enzyme POPB to yield a cyclic decapeptide. POPB first removes 10 residues from the N-terminus. Conformational trapping of the remaining peptide forces the enzyme to release this intermediate rather than proceed to macrocyclization. The enzyme rebinds the remaining peptide in a different conformation and catalyzes macrocyclization of the N-terminal 7 residues.

Cyclic heptapeptide that belongs to the MSDIN-like toxin family responsible for a large number of food poisoning cases and deaths. Cycloaminide B is non-toxic to mammals but shows immunosuppressive activity, probably through the inhibition of the action of interleukin-1 and interleukin-2. This chain is Cycloamanide B proprotein, found in Amanita phalloides (Death cap).